Consider the following 609-residue polypeptide: Replication protein A 70 kDa DNA-binding subunit (609 aa).

The interval 113 to 163 (GNPQPYNDGQPQPAAPAPASAPAPAPSKLQNNSAPPPSMNRGTSKLFGGGS) is disordered. A compositionally biased stretch (pro residues) spans 125–137 (PAAPAPASAPAPA). Residues 188 to 272 (WTVRARVTNK…VKNDYEMTFN (85 aa)) constitute a DNA-binding region (OB). Residues 472–494 (CPSQDCNKKVIDQQNGLFRCEKC) form a C4-type zinc finger.

This sequence belongs to the replication factor A protein 1 family. In terms of assembly, component of the heterotrimeric canonical replication protein A complex (RPA). Interacts with rpain-a.

Its subcellular location is the nucleus. It localises to the PML body. In terms of biological role, as part of the heterotrimeric replication protein A complex (RPA/RP-A), binds and stabilizes single-stranded DNA intermediates, that form during DNA replication or upon DNA stress. It prevents their reannealing and in parallel, recruits and activates different proteins and complexes involved in DNA metabolism. Thereby, it plays an essential role both in DNA replication and the cellular response to DNA damage. This chain is Replication protein A 70 kDa DNA-binding subunit (rpa1), found in Xenopus laevis (African clawed frog).